A 771-amino-acid chain; its full sequence is Kinase suppressor of Ras A (771 aa).

Residues 152-169 show a composition bias toward polar residues; sequence SRTSSGSTDEPSGQSTPA. Residues 152–172 are disordered; it reads SRTSSGSTDEPSGQSTPAIVT. The segment at 215 to 269 adopts a Phorbol-ester/DAG-type zinc-finger fold; the sequence is PHKWHRSTKFRFSGDAVCHFCQRPLGFGFLNAWEKCRSCKWKVHTQCKGRVGDSC. Disordered regions lie at residues 290 to 339 and 414 to 433; these read GMWK…ISGN and DSTG…EAVD. Low complexity predominate over residues 318–331; that stretch reads SSSSTNSSAPSTPA. Residues 477–748 form the Protein kinase domain; the sequence is DKQAPIIGRG…TDINLKLTAL (272 aa). ATP contacts are provided by residues 483–491 and Lys503; that span reads IGRGRFGKV. Residue Asp600 is the Proton acceptor of the active site.

This sequence belongs to the protein kinase superfamily. TKL Ser/Thr protein kinase family. As to quaternary structure, interacts with mek-2. Mg(2+) serves as cofactor.

The enzyme catalyses L-seryl-[protein] + ATP = O-phospho-L-seryl-[protein] + ADP + H(+). It catalyses the reaction L-threonyl-[protein] + ATP = O-phospho-L-threonyl-[protein] + ADP + H(+). In terms of biological role, serine/threonine-protein kinase which positively regulates Ras-mediated signaling probably acting at the level of let-60/ras or/and lin-45/raf. Involved in sex myoblast migration. Plays a role in responses to M.nematophilum-mediated bacterial infection by promoting tail swelling and preventing constipation. Functions redundantly with ksr-2 in the Ras-mediated regulation of larval survival, the development of excretory canal and in mpk-1 phosphorylation in somatic cells. In addition, involved in determining vulval precursor cell fate during vulval induction independently of its kinase activity. Plays a role in egg-laying. The chain is Kinase suppressor of Ras A from Caenorhabditis elegans.